A 227-amino-acid chain; its full sequence is Cytochrome c oxidase subunit 2 (227 aa).

The Mitochondrial intermembrane segment spans residues 1–14 (MACPVQLGFQDAAS). The chain crosses the membrane as a helical span at residues 15–45 (PIMEELTYFHDHTLMIVFLISSLVLYIISLM). The Mitochondrial matrix portion of the chain corresponds to 46–59 (LTTELTHTSTMDAQ). Residues 60-87 (EVETVWTILPAVILILIALPSLRILYMM) form a helical membrane-spanning segment. Residues 88 to 227 (DEITTPSLTL…HFEEWLLAML (140 aa)) are Mitochondrial intermembrane-facing. Positions 161, 196, 198, 200, 204, and 207 each coordinate Cu cation. Residue E198 coordinates Mg(2+).

The protein belongs to the cytochrome c oxidase subunit 2 family. In terms of assembly, component of the cytochrome c oxidase (complex IV, CIV), a multisubunit enzyme composed of 14 subunits. The complex is composed of a catalytic core of 3 subunits MT-CO1, MT-CO2 and MT-CO3, encoded in the mitochondrial DNA, and 11 supernumerary subunits COX4I, COX5A, COX5B, COX6A, COX6B, COX6C, COX7A, COX7B, COX7C, COX8 and NDUFA4, which are encoded in the nuclear genome. The complex exists as a monomer or a dimer and forms supercomplexes (SCs) in the inner mitochondrial membrane with NADH-ubiquinone oxidoreductase (complex I, CI) and ubiquinol-cytochrome c oxidoreductase (cytochrome b-c1 complex, complex III, CIII), resulting in different assemblies (supercomplex SCI(1)III(2)IV(1) and megacomplex MCI(2)III(2)IV(2)). Found in a complex with TMEM177, COA6, COX18, COX20, SCO1 and SCO2. Interacts with TMEM177 in a COX20-dependent manner. Interacts with COX20. Interacts with COX16. It depends on Cu cation as a cofactor.

The protein resides in the mitochondrion inner membrane. It catalyses the reaction 4 Fe(II)-[cytochrome c] + O2 + 8 H(+)(in) = 4 Fe(III)-[cytochrome c] + 2 H2O + 4 H(+)(out). Component of the cytochrome c oxidase, the last enzyme in the mitochondrial electron transport chain which drives oxidative phosphorylation. The respiratory chain contains 3 multisubunit complexes succinate dehydrogenase (complex II, CII), ubiquinol-cytochrome c oxidoreductase (cytochrome b-c1 complex, complex III, CIII) and cytochrome c oxidase (complex IV, CIV), that cooperate to transfer electrons derived from NADH and succinate to molecular oxygen, creating an electrochemical gradient over the inner membrane that drives transmembrane transport and the ATP synthase. Cytochrome c oxidase is the component of the respiratory chain that catalyzes the reduction of oxygen to water. Electrons originating from reduced cytochrome c in the intermembrane space (IMS) are transferred via the dinuclear copper A center (CU(A)) of subunit 2 and heme A of subunit 1 to the active site in subunit 1, a binuclear center (BNC) formed by heme A3 and copper B (CU(B)). The BNC reduces molecular oxygen to 2 water molecules using 4 electrons from cytochrome c in the IMS and 4 protons from the mitochondrial matrix. This chain is Cytochrome c oxidase subunit 2 (MT-CO2), found in Cheirogaleus medius (Fat-tailed dwarf lemur).